A 71-amino-acid chain; its full sequence is Large ribosomal subunit protein uL29 (71 aa).

The protein belongs to the universal ribosomal protein uL29 family.

This Rickettsia typhi (strain ATCC VR-144 / Wilmington) protein is Large ribosomal subunit protein uL29.